Reading from the N-terminus, the 571-residue chain is Proline--tRNA ligase (571 aa).

It belongs to the class-II aminoacyl-tRNA synthetase family. ProS type 1 subfamily. In terms of assembly, homodimer.

The protein resides in the cytoplasm. The catalysed reaction is tRNA(Pro) + L-proline + ATP = L-prolyl-tRNA(Pro) + AMP + diphosphate. Its function is as follows. Catalyzes the attachment of proline to tRNA(Pro) in a two-step reaction: proline is first activated by ATP to form Pro-AMP and then transferred to the acceptor end of tRNA(Pro). As ProRS can inadvertently accommodate and process non-cognate amino acids such as alanine and cysteine, to avoid such errors it has two additional distinct editing activities against alanine. One activity is designated as 'pretransfer' editing and involves the tRNA(Pro)-independent hydrolysis of activated Ala-AMP. The other activity is designated 'posttransfer' editing and involves deacylation of mischarged Ala-tRNA(Pro). The misacylated Cys-tRNA(Pro) is not edited by ProRS. This chain is Proline--tRNA ligase, found in Pseudomonas syringae pv. tomato (strain ATCC BAA-871 / DC3000).